Here is a 737-residue protein sequence, read N- to C-terminus: MDDDKPFQPKNISKMAELFMECEEEELEPWQKKVEETQDEDDDELIFVGEISSSKPAISNILNRGHSSSSSKGIKSEPHSPGIPEIFRTASQRCRDPPSNPVAASPRFHLVSKSSQSSVTVENASKPDFTKNSQVGSDNSSILLFDSTQESLPPSQDIPAIFREGMKNTSYVLKHPSTSKVNSVTPKKPKTSEDVPQINPSTSLPLIGSPPVTSSQVMLSKGTNTSSPYDAGADYLRACPKCNVQFNLLDPLKYHMKHCCPDMITKFLGVIVKSERPCDEDKTDSETGKLIMLVNEFYYGRHEGVTEKEPKTYTTFKCFSCSKVLKNNIRFMNHMKHHLELEKQNNESWENHTTCQHCYRQYPTPFQLQCHIESTHTPHEFSTICKICELSFETEHILLQHMKDTHKPGEMPYVCQVCQFRSSTFSDVEAHFRAAHENTKNLLCPFCLKVSKMATPYMNHYMKHQKKGVHRCPKCRLQFLTSKEKAEHKAQHRTFIKPKELEGLPPGAKVTIRASLGPLQSKLPTAPFGCAPGTSFLQVTPPTSQNTTARNPRKSNASRSKTSKLHATTSTASKVNTSKPRGRIAKSKAKPSYKQKRQRNRKNKMSLALKNIRCRRGIHKCIECHSKIKDFASHFSIYIHCSFCKYNTNCNKAFVNHMMSSHSNHPGKRFCIFKKHSGTLRGITLVCLKCDFLADSSGLDRMAKHLSQRKTHTCQVIIENVSKSTSTSEPTTGCSLK.

Glycyl lysine isopeptide (Lys-Gly) (interchain with G-Cter in SUMO2) cross-links involve residues Lys5, Lys10, Lys14, Lys33, and Lys55. The span at 57 to 66 (AISNILNRGH) shows a compositional bias: polar residues. The tract at residues 57-137 (AISNILNRGH…DFTKNSQVGS (81 aa)) is disordered. Lys75 participates in a covalent cross-link: Glycyl lysine isopeptide (Lys-Gly) (interchain with G-Cter in SUMO2). Ser80 is modified (phosphoserine). The segment covering 112-123 (SKSSQSSVTVEN) has biased composition (polar residues). Residues Lys113, Lys126, Lys167, Lys174, Lys180, and Lys187 each participate in a glycyl lysine isopeptide (Lys-Gly) (interchain with G-Cter in SUMO2) cross-link. The segment covering 176-185 (PSTSKVNSVT) has biased composition (polar residues). A disordered region spans residues 176–223 (PSTSKVNSVTPKKPKTSEDVPQINPSTSLPLIGSPPVTSSQVMLSKGT). Polar residues predominate over residues 211–223 (PVTSSQVMLSKGT). Position 223 is a phosphothreonine (Thr223). Residue Ser227 is modified to Phosphoserine. A Glycyl lysine isopeptide (Lys-Gly) (interchain with G-Cter in SUMO2) cross-link involves residue Lys273. 5 C2H2-type zinc fingers span residues 316-338 (FKCF…MKHH), 353-376 (TTCQ…ESTH), 383-406 (TICK…KDTH), 413-436 (YVCQ…RAAH), and 470-492 (HRCP…KAQH). Lys522 is covalently cross-linked (Glycyl lysine isopeptide (Lys-Gly) (interchain with G-Cter in SUMO2)). Positions 535–579 (SFLQVTPPTSQNTTARNPRKSNASRSKTSKLHATTSTASKVNTSK) are enriched in polar residues. Residues 535–602 (SFLQVTPPTS…YKQKRQRNRK (68 aa)) are disordered. Position 540 is a phosphothreonine (Thr540). Residues Lys564 and Lys574 each participate in a glycyl lysine isopeptide (Lys-Gly) (interchain with G-Cter in SUMO2) cross-link. Positions 580 to 602 (PRGRIAKSKAKPSYKQKRQRNRK) are enriched in basic residues.

The protein localises to the nucleus. May function as a transcription factor. This is Zinc finger protein 280C (ZNF280C) from Homo sapiens (Human).